A 497-amino-acid chain; its full sequence is Probable polyamine oxidase 4 (497 aa).

FAD contacts are provided by Glu58, Arg66, Val247, and Glu435. The Microbody targeting signal motif lies at 495–497; that stretch reads SRM.

The protein belongs to the flavin monoamine oxidase family. The cofactor is FAD. In terms of tissue distribution, highly expressed in roots, flowers and greening cotelydons. Lower expression in other tissues.

It is found in the peroxisome. The enzyme catalyses spermine + O2 + H2O = 3-aminopropanal + spermidine + H2O2. The catalysed reaction is spermidine + O2 + H2O = 3-aminopropanal + putrescine + H2O2. It participates in amine and polyamine degradation; spermine degradation. The protein operates within amine and polyamine degradation; spermidine degradation. Flavoenzyme involved in polyamine back-conversion. Catalyzes the oxidation of the secondary amino group of polyamines, such as spermine and spermidine. Substrate preference is spermine &gt; spermidine. No activity detected when putrescine or N(1)-acetylspermine are used as substrates. Plays an important role in the regulation of polyamine intracellular concentration. This chain is Probable polyamine oxidase 4 (PAO4), found in Arabidopsis thaliana (Mouse-ear cress).